Consider the following 327-residue polypeptide: Zinc transport protein ZntB (327 aa).

Topologically, residues 1–273 (MEGIKGSEVN…SRRTYTMSLM (273 aa)) are cytoplasmic. The helical transmembrane segment at 274-294 (AMVFLPSTFLTGLFGVNLGGI) threads the bilayer. The Periplasmic portion of the chain corresponds to 295 to 300 (PGGGYQ). Residues 301–321 (FGFSAFCIMLVVLIGGVAWWL) form a helical membrane-spanning segment. Residues 322–327 (HRSKWL) lie on the Cytoplasmic side of the membrane.

This sequence belongs to the CorA metal ion transporter (MIT) (TC 1.A.35) family.

The protein localises to the cell inner membrane. The enzyme catalyses Zn(2+)(out) + H(+)(out) = Zn(2+)(in) + H(+)(in). Its function is as follows. Zinc transporter. Acts as a Zn(2+):proton symporter, which likely mediates zinc ion uptake. This Enterobacter sp. (strain 638) protein is Zinc transport protein ZntB.